The following is a 157-amino-acid chain: Transcription elongation factor GreA (157 aa).

The protein belongs to the GreA/GreB family.

Its function is as follows. Necessary for efficient RNA polymerase transcription elongation past template-encoded arresting sites. The arresting sites in DNA have the property of trapping a certain fraction of elongating RNA polymerases that pass through, resulting in locked ternary complexes. Cleavage of the nascent transcript by cleavage factors such as GreA or GreB allows the resumption of elongation from the new 3'terminus. GreA releases sequences of 2 to 3 nucleotides. This Brucella anthropi (strain ATCC 49188 / DSM 6882 / CCUG 24695 / JCM 21032 / LMG 3331 / NBRC 15819 / NCTC 12168 / Alc 37) (Ochrobactrum anthropi) protein is Transcription elongation factor GreA.